The primary structure comprises 99 residues: uncharacterized protein (99 aa).

This is an uncharacterized protein from Micromonospora olivasterospora.